The following is a 124-amino-acid chain: Large ribosomal subunit protein bL12 (124 aa).

It belongs to the bacterial ribosomal protein bL12 family. Homodimer. Part of the ribosomal stalk of the 50S ribosomal subunit. Forms a multimeric L10(L12)X complex, where L10 forms an elongated spine to which 2 to 4 L12 dimers bind in a sequential fashion. Binds GTP-bound translation factors.

In terms of biological role, forms part of the ribosomal stalk which helps the ribosome interact with GTP-bound translation factors. Is thus essential for accurate translation. The sequence is that of Large ribosomal subunit protein bL12 from Brucella anthropi (strain ATCC 49188 / DSM 6882 / CCUG 24695 / JCM 21032 / LMG 3331 / NBRC 15819 / NCTC 12168 / Alc 37) (Ochrobactrum anthropi).